A 652-amino-acid polypeptide reads, in one-letter code: Epithelial sodium channel subunit gamma (652 aa).

The Cytoplasmic portion of the chain corresponds to 1 to 54; sequence MAPGEKIKAKIKKNLPVTGPQAPNIKELMQWYCLNTNTHGCRRIVVSRGRLRRL. The helical transmembrane segment at 55-75 threads the bilayer; sequence LWILFTLTAVALIFWQCALLI. Over 76 to 537 the chain is Extracellular; it reads SSFYTVSVSI…EQLLSNIGGQ (462 aa). 8 disulfides stabilise this stretch: cysteine 100–cysteine 286, cysteine 210–cysteine 217, cysteine 263–cysteine 270, cysteine 375–cysteine 460, cysteine 397–cysteine 456, cysteine 401–cysteine 452, cysteine 410–cysteine 437, and cysteine 412–cysteine 426. Residues 137–224 are gating release of inhibition by proteolysis (GRIP); protease-sensitive region that is responsible for the proteolytic activation of the channel; it reads RKRREAQSWS…SDCAVYTFSS (88 aa). Residue asparagine 212 is glycosylated (N-linked (GlcNAc...) asparagine). The N-linked (GlcNAc...) asparagine glycan is linked to asparagine 500. Residues 538 to 558 traverse the membrane as a helical segment; the sequence is LGLWMSCSVVCVIEIIEVFFI. Over 559–652 the chain is Cytoplasmic; it reads DSLSIIARHQ…LTDTQTTFPH (94 aa). Residues 610–631 form a disordered region; the sequence is SALSLPPAPGSQVPGTPPPRYN. The short motif at 626–630 is the PY motif; recruits WW domain-containing proteins and is thereby required for ubiquitination and inhibition of the channel by NEDD4 and NEDD4L element; it reads PPPRY.

This sequence belongs to the amiloride-sensitive sodium channel (TC 1.A.6) family. SCNN1G subfamily. As to quaternary structure, component of the heterotrimeric epithelial sodium channel (ENaC) composed of an alpha/SCNN1A, a beta/SCNN1B and a gamma/SCNN1G subunit. An additional delta/SCNN1D subunit can replace the alpha/SCNN1A subunit to form an alternative channel with specific properties. Interacts with WWP1 (via WW domains). Interacts with WWP2 (via WW domains); inhibits the channel. Interacts with the full-length immature form of PCSK9 (pro-PCSK9); inhibits ENaC by promoting its proteasomal degradation. Interacts with BPIFA1; the interaction is indirect via SCNN1B and inhibits the proteolytic maturation of SCNN1A and SCNN1G and the activation of ENaC. Phosphorylated on serine and threonine residues. Aldosterone and insulin increase the basal level of phosphorylation. In terms of processing, ubiquitinated. Can be ubiquitinated at multiple sites and undergo monoubiquitination and polyubiquitination. Ubiquitination by NEDD4 or NEDD4L inhibits the ENaC channel through endocytosis, intracellular retention and degradation of its individual subunits. Post-translationally, ENaC is activated through the proteolytic maturation of its subunits. Furin cleaves the SCNN1G subunit first, followed by cleavage by prostasin (PRSS8), which results in a stepwise increase in the open probability of the channel due to the release of an inhibitory tract. BPIFA1, which is recruited by the SCNN1B subunit, prevents the proteolytic activation of ENaC. N-glycosylated. N-linked glycans are processed to complex type during ENaC complex assembly and transport to the plasma membrane.

The protein localises to the apical cell membrane. The catalysed reaction is Na(+)(in) = Na(+)(out). Originally identified and characterized by its inhibition by the diuretic drug amiloride. Functionally, this is one of the three pore-forming subunits of the heterotrimeric epithelial sodium channel (ENaC), a critical regulator of sodium balance and fluid homeostasis. ENaC operates in epithelial tissues, where it mediates the electrodiffusion of sodium ions from extracellular fluid through the apical membrane of cells, with water following osmotically. It plays a key role in maintaining sodium homeostasis through electrogenic sodium reabsorption in the kidneys. Additionally, ENaC is essential for airway surface liquid homeostasis, which is crucial for proper mucus clearance. This Bos taurus (Bovine) protein is Epithelial sodium channel subunit gamma.